Here is a 132-residue protein sequence, read N- to C-terminus: Photosystem II extrinsic protein U (132 aa).

The N-terminal stretch at 1–29 (MKRLLSWLTGALVMAGLLSSLVLPSAVYA) is a signal peptide.

Belongs to the PsbU family. As to quaternary structure, PSII is composed of 1 copy each of membrane proteins PsbA, PsbB, PsbC, PsbD, PsbE, PsbF, PsbH, PsbI, PsbJ, PsbK, PsbL, PsbM, PsbT, PsbX, PsbY, PsbZ, Psb30/Ycf12, peripheral proteins PsbO, CyanoQ (PsbQ), PsbU, PsbV and a large number of cofactors. It forms dimeric complexes.

It localises to the cellular thylakoid membrane. Functionally, one of the extrinsic, lumenal subunits of photosystem II (PSII). PSII is a light-driven water plastoquinone oxidoreductase, using light energy to abstract electrons from H(2)O, generating a proton gradient subsequently used for ATP formation. The extrinsic proteins stabilize the structure of photosystem II oxygen-evolving complex (OEC), the ion environment of oxygen evolution and protect the OEC against heat-induced inactivation. In Synechococcus sp. (strain CC9902), this protein is Photosystem II extrinsic protein U.